Reading from the N-terminus, the 358-residue chain is Phenylalanine--tRNA ligase alpha subunit (358 aa).

Mg(2+) is bound at residue E258.

Belongs to the class-II aminoacyl-tRNA synthetase family. Phe-tRNA synthetase alpha subunit type 1 subfamily. Tetramer of two alpha and two beta subunits. Mg(2+) serves as cofactor.

Its subcellular location is the cytoplasm. It carries out the reaction tRNA(Phe) + L-phenylalanine + ATP = L-phenylalanyl-tRNA(Phe) + AMP + diphosphate + H(+). This Rhodospirillum centenum (strain ATCC 51521 / SW) protein is Phenylalanine--tRNA ligase alpha subunit.